A 124-amino-acid polypeptide reads, in one-letter code: uncharacterized protein (124 aa).

The segment covering 62 to 72 has biased composition (basic residues); sequence KKNKKQTFLKH. Residues 62–86 form a disordered region; that stretch reads KKNKKQTFLKHHQSDDHSENKVYKS. The span at 73–83 shows a compositional bias: basic and acidic residues; that stretch reads HQSDDHSENKV. Residues 80 to 112 adopt a coiled-coil conformation; sequence ENKVYKSKKLEKKIQQLNKKKQLIDTKINFLKE.

This is an uncharacterized protein from Dictyostelium discoideum (Social amoeba).